The primary structure comprises 769 residues: MSKFLRGISSISSASLKARASNFGVFHGVCSARNLHQSRLCLNVSKIPETYEEEKEIIDDINSKLPEKDILSSTRLRNIGVSAHIDSGKTTFTERVLFYTGRIKAIHEVRGRDAVGATMDHMDLEREKGITIQSAATFCSWDKDNKDYHFNLIDTPGHIDFTIEVERALRVLDGAVLVVCAVAGVQSQTVTVDRQMRRYNIPRVTFINKMDRMGSDPFRAIEQVNLKLKTPAAAIQVPIGAESELKGVVNIIDRVALYNEGSQGEEIRADTNIPEDLKDLVEEKRALLIETLADVDEEIADVYLEGEEPSVEQIKAAIRRATIARRFTPVLMGSALANKGVQNVLDAVVDYLPQPNEILNTGLDVSTEEEKRVNLIPSSAAPFVGLAFKLEEGKYGQLTYIRVYQGKLKKGSYMNHLKSGKKVKVSRLVRMHSNDMEDVDEVGAGEICATFGIDCASGDTFIGQNSEQQIAMSSMFVPEAVISLSIAPKAKDNGSFSKAMNRFQKEDPTFRVKYDAESKETIISGMGELHLEIYVERMKREYGIDCITGKPQVAYREAITAPTSFDYTHKKQSGGSGQYARVVGEMKPLDGENKFSQHIVGGKIPEKFLFACSKGFDDSLEKGPLIGHRVLGAHMHINDGQTHVVDSSELSFRTATHGAFKQAFLNAQPVILEPIMSVEISAPNEFQGTVVGLVNKIGGMIMETVNGQDEFTVTAECSLNSMFGFSTSLRACTQGKGEFTLEFNKYAQCAPHLQKQLIAEHEKKLQTKK.

The N-terminal 42 residues, 1 to 42 (MSKFLRGISSISSASLKARASNFGVFHGVCSARNLHQSRLCL), are a transit peptide targeting the mitochondrion. Positions 74–356 (TRLRNIGVSA…AVVDYLPQPN (283 aa)) constitute a tr-type G domain. Residues 83 to 90 (AHIDSGKT), 154 to 158 (DTPGH), and 208 to 211 (NKMD) each bind GTP.

The protein belongs to the TRAFAC class translation factor GTPase superfamily. Classic translation factor GTPase family. EF-G/EF-2 subfamily.

Its subcellular location is the mitochondrion. Its pathway is protein biosynthesis; polypeptide chain elongation. In terms of biological role, mitochondrial GTPase that catalyzes the GTP-dependent ribosomal translocation step during translation elongation. During this step, the ribosome changes from the pre-translocational (PRE) to the post-translocational (POST) state as the newly formed A-site-bound peptidyl-tRNA and P-site-bound deacylated tRNA move to the P and E sites, respectively. Catalyzes the coordinated movement of the two tRNA molecules, the mRNA and conformational changes in the ribosome. The polypeptide is Elongation factor G, mitochondrial (Debaryomyces hansenii (strain ATCC 36239 / CBS 767 / BCRC 21394 / JCM 1990 / NBRC 0083 / IGC 2968) (Yeast)).